The following is a 218-amino-acid chain: DNA-directed RNA polymerase III subunit RPC7-like (218 aa).

Residues 130-218 (TIILPKRPPK…SDDNMDEAIY (89 aa)) form a disordered region. A compositionally biased stretch (basic and acidic residues) spans 139–160 (KSTDDKEETIQKLETLEKKEEE). Composition is skewed to acidic residues over residues 161-193 (VTSEEDEEKEEEEEKEEGEEEEYDEEEHEEETD) and 201-218 (NGEDFGGDSDDNMDEAIY).

The protein belongs to the eukaryotic RPC7 RNA polymerase subunit family. As to quaternary structure, component of the RNA polymerase III (Pol III) complex consisting of 17 subunits. Pol III exists as two alternative complexes defined by the mutually exclusive incorporation of subunit POLR3G/RPC7alpha or POLR3GL/RPC7beta. Found in a trimeric complex with POLR3C/RPC3 and POLR3F/RPC6. Directly interacts with POLR3C. As to expression, expressed in the liver.

It localises to the nucleus. Functionally, DNA-dependent RNA polymerase catalyzes the transcription of DNA into RNA using the four ribonucleoside triphosphates as substrates. Specific peripheric component of RNA polymerase III which synthesizes small RNAs, such as 5S rRNA and tRNAs. This chain is DNA-directed RNA polymerase III subunit RPC7-like, found in Mus musculus (Mouse).